The chain runs to 449 residues: Zinc finger and BTB domain-containing protein 14 (449 aa).

Residues 36-102 (CDIAIVVEDV…MYTAKISVKK (67 aa)) enclose the BTB domain. K46 is covalently cross-linked (Glycyl lysine isopeptide (Lys-Gly) (interchain with G-Cter in SUMO2)). A Nuclear localization signal motif is present at residues 50–66 (HRCVLAACSTYFKKLFK). Residues 153–194 (GDAADTQDDDVEEIGDQDDSPSDDTVEGTPPSQEDGKSPTTT) form a disordered region. Over residues 157–178 (DTQDDDVEEIGDQDDSPSDDTV) the composition is skewed to acidic residues. Residues K203 and K249 each participate in a glycyl lysine isopeptide (Lys-Gly) (interchain with G-Cter in SUMO2) cross-link. 5 consecutive C2H2-type zinc fingers follow at residues 277-304 (IACQ…ADRP), 305-332 (FVCE…GYKP), 333-360 (YSCE…NERP), 361-388 (FACH…GEKP), and 389-417 (FVCG…ERKQ).

This sequence belongs to the krueppel C2H2-type zinc-finger protein family. As to quaternary structure, interacts with ZBTB21.

It is found in the nucleus. Its function is as follows. Transcriptional activator of the dopamine transporter (DAT), binding it's promoter at the consensus sequence 5'-CCTGCACAGTTCACGGA-3'. Binds to 5'-d(GCC)(n)-3' trinucleotide repeats in promoter regions and acts as a repressor of the FMR1 gene. Transcriptional repressor of MYC and thymidine kinase promoters. The sequence is that of Zinc finger and BTB domain-containing protein 14 (ZBTB14) from Homo sapiens (Human).